Consider the following 1502-residue polypeptide: E3 ubiquitin-protein ligase UPL4 (1502 aa).

Residues Met1 to Ala21 are compositionally biased toward basic and acidic residues. The tract at residues Met1–Asp107 is disordered. Residues Cys22–Gly46 show a composition bias toward polar residues. Residues Asp67 to Asp90 show a composition bias toward acidic residues. Residues Pro91–Asp107 are compositionally biased toward basic and acidic residues. ARM repeat units follow at residues Glu143–Asp183, Pro186–Arg226, Glu228–Lys265, and Leu267–Asp306. The tract at residues Cys833–Asp881 is disordered. Positions Asp849 to Thr875 are enriched in polar residues. The interval Arg1022–Ser1096 is K-box. In terms of domain architecture, HECT spans Lys1128–Ser1502. Cys1469 functions as the Glycyl thioester intermediate in the catalytic mechanism.

The protein belongs to the UPL family. K-HECT subfamily.

It catalyses the reaction S-ubiquitinyl-[E2 ubiquitin-conjugating enzyme]-L-cysteine + [acceptor protein]-L-lysine = [E2 ubiquitin-conjugating enzyme]-L-cysteine + N(6)-ubiquitinyl-[acceptor protein]-L-lysine.. It participates in protein modification; protein ubiquitination. In terms of biological role, probable E3 ubiquitin-protein ligase which mediates ubiquitination and subsequent proteasomal degradation of target proteins. The sequence is that of E3 ubiquitin-protein ligase UPL4 (UPL4) from Arabidopsis thaliana (Mouse-ear cress).